Reading from the N-terminus, the 883-residue chain is Valine--tRNA ligase (883 aa).

Positions 46-56 match the 'HIGH' region motif; it reads PNVTGKLHLGH. Residues 520–524 carry the 'KMSKS' region motif; sequence KMSKS. Lys523 lines the ATP pocket. Residues 809–844 are a coiled coil; that stretch reads LADLLNVEEELARLEKELAKWQKELDMVGKKLSNER.

The protein belongs to the class-I aminoacyl-tRNA synthetase family. ValS type 1 subfamily. Monomer.

Its subcellular location is the cytoplasm. It carries out the reaction tRNA(Val) + L-valine + ATP = L-valyl-tRNA(Val) + AMP + diphosphate. Catalyzes the attachment of valine to tRNA(Val). As ValRS can inadvertently accommodate and process structurally similar amino acids such as threonine, to avoid such errors, it has a 'posttransfer' editing activity that hydrolyzes mischarged Thr-tRNA(Val) in a tRNA-dependent manner. In Streptococcus agalactiae serotype V (strain ATCC BAA-611 / 2603 V/R), this protein is Valine--tRNA ligase.